A 988-amino-acid chain; its full sequence is Transcriptional regulator of yeast form adherence 5 (988 aa).

2 consecutive C2H2-type zinc fingers follow at residues 7-29 (YICAFCARAFTRSEHKQRHERSH) and 35-59 (FHCLHCTSSFVRRDLLQRHCRTVHH). Residues 59 to 83 (HTNLNPSTLPSNKSLKNPTTNPLDL) are compositionally biased toward polar residues. Disordered stretches follow at residues 59-129 (HTNL…SSVG) and 174-229 (SMES…SNNN). Positions 84–106 (SNNEGTTTTTKTGNRKNNSNKNG) are enriched in low complexity. Composition is skewed to polar residues over residues 113 to 129 (TNPNPAVSNDDNRSSVG) and 174 to 208 (SMESDQHSLTTFDSPTSSLGVSMTPSGSTNSEIVL).

The protein resides in the nucleus. Its function is as follows. Transcription factor required for yeast cell adherence to silicone substrate. The chain is Transcriptional regulator of yeast form adherence 5 (TRY5) from Candida albicans (strain SC5314 / ATCC MYA-2876) (Yeast).